The chain runs to 29 residues: U1-pseudomyrmecitoxin-Pt1 subunit SS1 (29 aa).

Belongs to the myrmexin family. In terms of assembly, heterodimer composed of subunit SS1 and subunit LS1 (U1-PSDTX-Pt1b), and heterodimer composed of subunit SS1 and LS2 (U1-PSDTX-Pt1a); disulfide-linked. Expressed by the venom gland.

It localises to the secreted. This heterodimer may have anti-inflammatory properties, since the myrmexin complex (composed of 6 SS-LS heterodimers) inhibits carrageenin-induced edema in a dose-dependent manner (after subcutaneous injection into rats). This chain is U1-pseudomyrmecitoxin-Pt1 subunit SS1, found in Pseudomyrmex triplarinus (Ant).